Consider the following 591-residue polypeptide: MPCVQAQYGSSPQGASPASQSYTYHSSGEYSSDFLTPEFVKFSMDLTNTEITATTSLPSFSTFMDNYNTSYDVKPPCLYQMPLSGQQSSVKVEDIQMHGYQQHGHLPPQSEEMMSHSGSVYYKPSSPPTSSTPGFPVQHSPMWDNHGSLHSFNQNYVATRGGHVPRLSLFSFKQSPPGTPVSSCQMRFDGHHVSMNPETSGAHHVIDGQTFAVPNPIRKQASMGFPGLQLGHASQLIDSQVPSPPSRGSPSNEGLCAVCGDNAACQHYGVRTCEGCKGFFKRTVQKNAKYVCLANKNCPVDKRRRNRCQYCRFQKCLVVGMVKEVVRTDSLKGRRGRLPSKPKSPQEPSPPSPPVSLISALVRAHVDSNPAVSSLDYSRFQANPEYQMNGDDTQHIQQFYDLLTGSMEIIRGWAEKIPGFSELHKQDQDLLFESAFLELFVLRLAYRSNPAEGKLIFCNGVVLNRLQCVRGFGEWIDSIVDFSSNLHSMNIDISAFSCIAALAVITERHGLKEPKRVEELQNKIVNCLKDHVTFNNGGLNRPNYLSKLLGKLPELRTLCTQGLQRIFYLKLEDLVPPPAIIDKLFLDTLPF.

2 disordered regions span residues 1–22 and 110–133; these read MPCVQAQYGSSPQGASPASQSY and SEEMMSHSGSVYYKPSSPPTSSTP. Positions 8–22 are enriched in low complexity; the sequence is YGSSPQGASPASQSY. The segment at residues 253 to 328 is a DNA-binding region (nuclear receptor); the sequence is EGLCAVCGDN…VGMVKEVVRT (76 aa). NR C4-type zinc fingers lie at residues 256-276 and 292-311; these read CAVCGDNAACQHYGVRTCEGC and CLANKNCPVDKRRRNRCQYC. The Bipartite nuclear localization signal (NLS1) motif lies at 280–307; that stretch reads FKRTVQKNAKYVCLANKNCPVDKRRRNR. Residues 330 to 354 are disordered; it reads SLKGRRGRLPSKPKSPQEPSPPSPP. A Nuclear localization signal (NLS1) motif is present at residues 331–343; sequence LKGRRGRLPSKPK. Over residues 345-354 the composition is skewed to pro residues; it reads PQEPSPPSPP. The 236-residue stretch at 353–588 folds into the NR LBD domain; the sequence is PPVSLISALV…AIIDKLFLDT (236 aa). Residues 436-445 carry the nuclear export sequence (NES1) motif; sequence FLELFVLRLA. The nuclear export sequence (NES2) motif lies at 561–570; it reads QGLQRIFYLK.

This sequence belongs to the nuclear hormone receptor family.

Its subcellular location is the cytoplasm. It localises to the nucleus. In terms of biological role, transcriptional regulator which may play a role in the differentiation and maintenance of meso-diencephalic dopaminergic (mdDA) neurons. This chain is Nuclear receptor subfamily 4 group A member 2 (nr4a2), found in Xenopus tropicalis (Western clawed frog).